The sequence spans 232 residues: Pseudaminic acid cytidylyltransferase (232 aa).

It belongs to the CMP-NeuNAc synthase family. Mg(2+) serves as cofactor.

The catalysed reaction is pseudaminate + CTP = CMP-pseudaminate + diphosphate. Its function is as follows. Catalyzes the final step in the biosynthesis of pseudaminic acid, a sialic-acid-like sugar that is used to modify flagellin. Mediates the activation of pseudaminic acid with CMP by forming CMP-pseudaminic acid. In Campylobacter jejuni subsp. jejuni serotype O:23/36 (strain 81-176), this protein is Pseudaminic acid cytidylyltransferase (pseF).